The primary structure comprises 258 residues: Global transcriptional regulator CodY (258 aa).

Residues 1–156 (MSSLLDKTRM…SATIIGLEIL (156 aa)) form a GAF domain region. A DNA-binding region (H-T-H motif) is located at residues 204–223 (ASKIADKVGITRSVIVNALR).

It belongs to the CodY family.

It is found in the cytoplasm. In terms of biological role, DNA-binding global transcriptional regulator which is involved in the adaptive response to starvation and acts by directly or indirectly controlling the expression of numerous genes in response to nutrient availability. During rapid exponential growth, CodY is highly active and represses genes whose products allow adaptation to nutrient depletion. This is Global transcriptional regulator CodY from Clostridium botulinum (strain Okra / Type B1).